The sequence spans 795 residues: Phenylalanine--tRNA ligase beta subunit (795 aa).

A tRNA-binding domain is found at 39–148 (AGQFHGVVVG…IDAPLGVDLR (110 aa)). The 76-residue stretch at 401–476 (PQSATITLRR…RIYGYNNIPD (76 aa)) folds into the B5 domain. Mg(2+) contacts are provided by D454, D460, E463, and E464. An FDX-ACB domain is found at 701–794 (SRFPSNRRDI…LKQRFQASLR (94 aa)).

This sequence belongs to the phenylalanyl-tRNA synthetase beta subunit family. Type 1 subfamily. As to quaternary structure, tetramer of two alpha and two beta subunits. Requires Mg(2+) as cofactor.

The protein localises to the cytoplasm. It carries out the reaction tRNA(Phe) + L-phenylalanine + ATP = L-phenylalanyl-tRNA(Phe) + AMP + diphosphate + H(+). This chain is Phenylalanine--tRNA ligase beta subunit, found in Photorhabdus laumondii subsp. laumondii (strain DSM 15139 / CIP 105565 / TT01) (Photorhabdus luminescens subsp. laumondii).